The sequence spans 670 residues: Probable membrane-anchored ferredoxin csal_0991 (670 aa).

5 consecutive transmembrane segments (helical) span residues 2–22, 68–90, 94–113, 135–155, and 159–179; these read LDIL…IGAV, VATA…LGLA, LGWL…LFVA, LMAF…VLPA, and GWLV…ELVF. 2 consecutive 4Fe-4S ferredoxin-type domains span residues 241–271 and 316–347; these read WNQL…PLNP and GTAL…HVDA. Residues Cys250, Cys253, Cys256, Cys260, Cys328, Cys331, Cys334, and Cys338 each coordinate [4Fe-4S] cluster. A disordered region spans residues 648 to 670; the sequence is NTPPATPASHDTAASQATEEVLS. Residues 659–670 show a composition bias toward polar residues; the sequence is TAASQATEEVLS.

[4Fe-4S] cluster serves as cofactor.

The protein localises to the cell inner membrane. Participates in the electron transfer process during N,N-dimethylglycine (DMG) degradation to sarcosine. Probably transfers the electrons from N,N-dimethylglycine/sarcosine dehydrogenase (DMGDH) to the electron transfer flavoprotein (ETF) EtfA-EtfB. The polypeptide is Probable membrane-anchored ferredoxin csal_0991 (Chromohalobacter salexigens (strain ATCC BAA-138 / DSM 3043 / CIP 106854 / NCIMB 13768 / 1H11)).